The sequence spans 104 residues: uncharacterized protein (104 aa).

Residues 77–98 (IAAVRANIIICACFFYLFCYCS) traverse the membrane as a helical segment.

The protein resides in the membrane. This is an uncharacterized protein from Saccharomyces cerevisiae (strain ATCC 204508 / S288c) (Baker's yeast).